We begin with the raw amino-acid sequence, 461 residues long: O-methyltransferase CTB2 (461 aa).

Asp-288 is a binding site for S-adenosyl-L-methionine. His-339 acts as the Proton acceptor in catalysis.

This sequence belongs to the class I-like SAM-binding methyltransferase superfamily. Cation-independent O-methyltransferase family. COMT subfamily.

It functions in the pathway mycotoxin biosynthesis. O-methyltransferase; part of the gene cluster that mediates the biosynthesis of cercosporin, a light-activated, non-host-selective toxin. The perylenequinone chromophore of cercosporin absorbs light energy to attain an electronically-activated triplet state and produces active oxygen species such as the hydroxyl radical, superoxide, hydrogen peroxide or singlet oxygen upon reaction with oxygen molecules. These reactive oxygen species cause damage to various cellular components including lipids, proteins and nucleic acids. The first step of cercosporin biosynthesis is performed by the polyketide synthase CTB1 which catalyzes the formation of nor-toralactone. The starter unit acyltransferase (SAT) domain of CTB1 initiates polyketide extension by the selective utilization of acetyl-CoA, which is elongated to the heptaketide in the beta-ketoacyl synthase (KS) domain by successive condensations with six malonyl units introduced by the malonyl acyltransferase (MAT) domain. The product template (PT) domain catalyzes C4-C9 and C2-C11 aldol cyclizations and dehydrations to a trihydroxynaphthalene, which is thought to be delivered to the thioesterase (TE) domain for product release. The bifunctional enzyme CTB3 then methylates nor-toralactone to toralactone before conducting an unusual oxidative aromatic ring opening. The O-methyltransferase CTB2 further methylates the nascent OH-6 of the CBT3 product, blocking further oxidation at this site before the reductase CTB6 reduces the 2-oxopropyl ketone at position C7, giving naphthalene. The FAD-dependent monooxygenase CTB5 in concert with the multicopper oxidase CTB12 are responsible for homodimerization of naphthalene with CTB7 installing the dioxepine moiety, finally producing cercosporin. The fasciclin domain-containing protein CTB11 might act with CTB5 and CTB12 whereas the roles of CTB9 and CTB10 have still to be elucidated. This Cercospora nicotianae (Barn spot disease fungus) protein is O-methyltransferase CTB2.